A 348-amino-acid polypeptide reads, in one-letter code: D-erythrose-4-phosphate dehydrogenase (348 aa).

NAD(+) is bound by residues 12–13 (RI) and Arg-81. Substrate is bound by residues 154–156 (SCT), Arg-200, 213–214 (TK), and Arg-236. The active-site Nucleophile is Cys-155. Asn-318 is a binding site for NAD(+).

The protein belongs to the glyceraldehyde-3-phosphate dehydrogenase family. Epd subfamily. Homotetramer.

The protein resides in the cytoplasm. The catalysed reaction is D-erythrose 4-phosphate + NAD(+) + H2O = 4-phospho-D-erythronate + NADH + 2 H(+). Its pathway is cofactor biosynthesis; pyridoxine 5'-phosphate biosynthesis; pyridoxine 5'-phosphate from D-erythrose 4-phosphate: step 1/5. In terms of biological role, catalyzes the NAD-dependent conversion of D-erythrose 4-phosphate to 4-phosphoerythronate. This chain is D-erythrose-4-phosphate dehydrogenase, found in Salmonella dublin (strain CT_02021853).